An 872-amino-acid polypeptide reads, in one-letter code: Alanine--tRNA ligase (872 aa).

Zn(2+)-binding residues include His567, His571, Cys669, and His673.

It belongs to the class-II aminoacyl-tRNA synthetase family. It depends on Zn(2+) as a cofactor.

The protein localises to the cytoplasm. It catalyses the reaction tRNA(Ala) + L-alanine + ATP = L-alanyl-tRNA(Ala) + AMP + diphosphate. In terms of biological role, catalyzes the attachment of alanine to tRNA(Ala) in a two-step reaction: alanine is first activated by ATP to form Ala-AMP and then transferred to the acceptor end of tRNA(Ala). Also edits incorrectly charged Ser-tRNA(Ala) and Gly-tRNA(Ala) via its editing domain. In Streptococcus agalactiae serotype Ia (strain ATCC 27591 / A909 / CDC SS700), this protein is Alanine--tRNA ligase.